A 206-amino-acid chain; its full sequence is Small ribosomal subunit protein uS4 (206 aa).

Residues 18 to 45 (NIWGRPKSPVNRREYGPGQHGQRRKGKM) form a disordered region. One can recognise an S4 RNA-binding domain in the interval 94 to 157 (RRLDAVVYRA…KQLASVLEAV (64 aa)).

This sequence belongs to the universal ribosomal protein uS4 family. In terms of assembly, part of the 30S ribosomal subunit. Contacts protein S5. The interaction surface between S4 and S5 is involved in control of translational fidelity.

Its function is as follows. One of the primary rRNA binding proteins, it binds directly to 16S rRNA where it nucleates assembly of the body of the 30S subunit. With S5 and S12 plays an important role in translational accuracy. This Ruegeria pomeroyi (strain ATCC 700808 / DSM 15171 / DSS-3) (Silicibacter pomeroyi) protein is Small ribosomal subunit protein uS4.